The sequence spans 766 residues: BMP/retinoic acid-inducible neural-specific protein 3 (766 aa).

A signal peptide spans Met1–Ala33. The region spanning Arg74 to Ala264 is the MACPF domain. Asn168, Asn337, Asn456, Asn562, Asn609, and Asn641 each carry an N-linked (GlcNAc...) asparagine glycan.

This sequence belongs to the BRINP family. Strongly expressed in oral keratinocytes compared to the weak expression in tongue squamous cell carcinoma (SCC). Expressed in endothelial and aortic smooth muscle cells. Overexpressed in gonadotropinomas compared to normal pituitarie tissues.

It localises to the secreted. The protein localises to the mitochondrion. In terms of biological role, inhibits neuronal cell proliferation by negative regulation of the cell cycle transition. Promotes pituitary gonadotrope cell proliferation, migration and invasion, when overexpressed. May play a role in cell pituitary tumor development. The sequence is that of BMP/retinoic acid-inducible neural-specific protein 3 (BRINP3) from Homo sapiens (Human).